Reading from the N-terminus, the 214-residue chain is Membrane antigen containing repeating peptides (214 aa).

4 tandem repeats follow at residues 1–14 (QETS…EETL), 15–28 (QETS…EETL), 29–42 (QETS…EETL), and 43–56 (QETS…EETL). Residues 1–31 (QETSAKLADTEETLQETSAKLADTEETLQET) are disordered. Positions 1-56 (QETSAKLADTEETLQETSAKLADTEETLQETSAKLADTEETLQETSAKLADTEETL) are 4 X 14 AA tandem repeats. The segment at 180-214 (CSLHPTPRRLGDVSNRENSIENKTRSASRLSGRLF) is disordered. A compositionally biased stretch (basic and acidic residues) spans 188 to 203 (RLGDVSNRENSIENKT).

It is found in the membrane. In Leishmania major, this protein is Membrane antigen containing repeating peptides.